A 513-amino-acid polypeptide reads, in one-letter code: ATP synthase subunit alpha (513 aa).

169 to 176 provides a ligand contact to ATP; it reads GDRQIGKT.

The protein belongs to the ATPase alpha/beta chains family. In terms of assembly, F-type ATPases have 2 components, CF(1) - the catalytic core - and CF(0) - the membrane proton channel. CF(1) has five subunits: alpha(3), beta(3), gamma(1), delta(1), epsilon(1). CF(0) has three main subunits: a(1), b(2) and c(9-12). The alpha and beta chains form an alternating ring which encloses part of the gamma chain. CF(1) is attached to CF(0) by a central stalk formed by the gamma and epsilon chains, while a peripheral stalk is formed by the delta and b chains.

The protein resides in the cell inner membrane. It catalyses the reaction ATP + H2O + 4 H(+)(in) = ADP + phosphate + 5 H(+)(out). In terms of biological role, produces ATP from ADP in the presence of a proton gradient across the membrane. The alpha chain is a regulatory subunit. The chain is ATP synthase subunit alpha from Shewanella piezotolerans (strain WP3 / JCM 13877).